Here is a 122-residue protein sequence, read N- to C-terminus: UPF0102 protein CLH_1204 (122 aa).

Belongs to the UPF0102 family.

This chain is UPF0102 protein CLH_1204, found in Clostridium botulinum (strain Alaska E43 / Type E3).